Reading from the N-terminus, the 428-residue chain is C4-dicarboxylate transport protein (428 aa).

8 helical membrane passes run 8-28, 44-64, 78-98, 148-168, 184-204, 222-242, 307-327, and 355-375; these read VLYV…HLYP, LIKM…IAGM, LLYF…ATHI, GEIL…AHLG, VLFG…FGAM, LIGT…GAIA, IYMT…LTWM, and AATL…ILGI.

The protein belongs to the dicarboxylate/amino acid:cation symporter (DAACS) (TC 2.A.23) family.

The protein resides in the cell inner membrane. In terms of biological role, responsible for the transport of dicarboxylates such as succinate, fumarate, and malate from the periplasm across the membrane. This Burkholderia thailandensis (strain ATCC 700388 / DSM 13276 / CCUG 48851 / CIP 106301 / E264) protein is C4-dicarboxylate transport protein.